An 89-amino-acid chain; its full sequence is Translation initiation factor IF-1 1 (89 aa).

In terms of domain architecture, S1-like spans 1-73 (MSNKEQLIEM…TKGRITFRHL (73 aa)).

This sequence belongs to the IF-1 family. Component of the 30S ribosomal translation pre-initiation complex which assembles on the 30S ribosome in the order IF-2 and IF-3, IF-1 and N-formylmethionyl-tRNA(fMet); mRNA recruitment can occur at any time during PIC assembly.

It is found in the cytoplasm. One of the essential components for the initiation of protein synthesis. Stabilizes the binding of IF-2 and IF-3 on the 30S subunit to which N-formylmethionyl-tRNA(fMet) subsequently binds. Helps modulate mRNA selection, yielding the 30S pre-initiation complex (PIC). Upon addition of the 50S ribosomal subunit IF-1, IF-2 and IF-3 are released leaving the mature 70S translation initiation complex. This chain is Translation initiation factor IF-1 1, found in Acidovorax sp. (strain JS42).